A 262-amino-acid polypeptide reads, in one-letter code: Sulfur carrier protein FdhD (262 aa).

Residue cysteine 105 is the Cysteine persulfide intermediate of the active site. 246 to 251 (FVRKNR) is a Mo-bis(molybdopterin guanine dinucleotide) binding site.

It belongs to the FdhD family.

It localises to the cytoplasm. Required for formate dehydrogenase (FDH) activity. Acts as a sulfur carrier protein that transfers sulfur from IscS to the molybdenum cofactor prior to its insertion into FDH. The sequence is that of Sulfur carrier protein FdhD from Picrophilus torridus (strain ATCC 700027 / DSM 9790 / JCM 10055 / NBRC 100828 / KAW 2/3).